We begin with the raw amino-acid sequence, 294 residues long: Undecaprenyl-diphosphatase (294 aa).

The next 6 membrane-spanning stretches (helical) occupy residues 39-59 (PGAA…ILYF), 93-113 (ATLG…GFTL), 123-143 (NLWI…VVDA), 198-218 (SFLM…VKAV), 232-252 (PTLV…IGFL), and 268-288 (IGLA…AIDP).

This sequence belongs to the UppP family.

It localises to the cell membrane. It catalyses the reaction di-trans,octa-cis-undecaprenyl diphosphate + H2O = di-trans,octa-cis-undecaprenyl phosphate + phosphate + H(+). Functionally, catalyzes the dephosphorylation of undecaprenyl diphosphate (UPP). Confers resistance to bacitracin. This is Undecaprenyl-diphosphatase from Bifidobacterium longum subsp. infantis (strain ATCC 15697 / DSM 20088 / JCM 1222 / NCTC 11817 / S12).